The following is a 199-amino-acid chain: MARCKS-related protein (199 aa).

The tract at residues 1-199 (MGSQSSKAPR…GPASASAENE (199 aa)) is disordered. Glycine 2 carries N-myristoyl glycine lipidation. At threonine 14 the chain carries Phosphothreonine. Residues 16–26 (EEAAGASPAKA) are compositionally biased toward low complexity. Phosphoserine occurs at positions 22, 36, and 48. Residues 53–64 (GADEAAGATGDA) are compositionally biased toward low complexity. Position 71 is a phosphoserine (serine 71). Basic and acidic residues predominate over residues 74 to 85 (AEAKGEVAPKET). Residue threonine 85 is modified to Phosphothreonine. Residues 86–98 (PKKKKKFSFKKPF) show a composition bias toward basic residues. The interval 87 to 110 (KKKKKFSFKKPFKLSGLSFKRNRK) is effector domain involved in lipid-binding and calmodulin-binding. Phosphoserine; by PKC is present on residues serine 93, serine 101, and serine 104. Serine 119 is subject to Phosphoserine. Residue serine 120 is modified to Phosphoserine; by MAPK8. A phosphoserine mark is found at serine 132 and serine 135. Threonine 148 bears the Phosphothreonine; by MAPK8 mark. Phosphoserine is present on residues serine 151, serine 162, and serine 165. Positions 175 to 199 (GPQAAEPSTPSGPESGPASASAENE) are enriched in low complexity. Threonine 183 is subject to Phosphothreonine; by MAPK8.

The protein belongs to the MARCKS family. Binds to filamentous actin (F-actin), but not to monomeric G-actin, independently of its phosphorylation status. Interacts with calmodulin. Phosphorylated. Phosphorylation at Ser-120 and Thr-183 is non-redundantly catalyzed by MAPK8 in vivo. Phosphorylation at Thr-148 is preferentially catalyzed by MAPK8 in vivo, but this modification can also be catalyzed by other kinases in the absence of MAPK8. May be phosphorylated by protein kinase C, which disrupts the interaction with calmodulin.

The protein resides in the cytoplasm. It is found in the cytoskeleton. The protein localises to the cell membrane. In terms of biological role, controls cell movement by regulating actin cytoskeleton homeostasis and filopodium and lamellipodium formation. When unphosphorylated, induces cell migration. When phosphorylated by MAPK8, induces actin bundles formation and stabilization, thereby reducing actin plasticity, hence restricting cell movement, including neuronal migration. May be involved in coupling the protein kinase C and calmodulin signal transduction systems. This is MARCKS-related protein (Marcksl1) from Rattus norvegicus (Rat).